The primary structure comprises 236 residues: 2-C-methyl-D-erythritol 4-phosphate cytidylyltransferase (236 aa).

Belongs to the IspD/TarI cytidylyltransferase family. IspD subfamily.

The enzyme catalyses 2-C-methyl-D-erythritol 4-phosphate + CTP + H(+) = 4-CDP-2-C-methyl-D-erythritol + diphosphate. The protein operates within isoprenoid biosynthesis; isopentenyl diphosphate biosynthesis via DXP pathway; isopentenyl diphosphate from 1-deoxy-D-xylulose 5-phosphate: step 2/6. Functionally, catalyzes the formation of 4-diphosphocytidyl-2-C-methyl-D-erythritol from CTP and 2-C-methyl-D-erythritol 4-phosphate (MEP). The chain is 2-C-methyl-D-erythritol 4-phosphate cytidylyltransferase from Pseudomonas syringae pv. syringae (strain B728a).